The chain runs to 586 residues: Glutamate--tRNA ligase (586 aa).

The short motif at 114–124 (PNPNGPWHVGH) is the 'HIGH' region element. Basic and acidic residues-rich tracts occupy residues 431 to 443 (ARGE…HEAV) and 459 to 468 (HPEHPDRGDR). Residues 431 to 468 (ARGEGPEESHEAVEVPVDDGPDEATPQVHPEHPDRGDR) are disordered.

Belongs to the class-I aminoacyl-tRNA synthetase family. Glutamate--tRNA ligase type 2 subfamily.

The protein resides in the cytoplasm. It carries out the reaction tRNA(Glu) + L-glutamate + ATP = L-glutamyl-tRNA(Glu) + AMP + diphosphate. Its function is as follows. Catalyzes the attachment of glutamate to tRNA(Glu) in a two-step reaction: glutamate is first activated by ATP to form Glu-AMP and then transferred to the acceptor end of tRNA(Glu). In Halobacterium salinarum (strain ATCC 29341 / DSM 671 / R1), this protein is Glutamate--tRNA ligase.